Reading from the N-terminus, the 1235-residue chain is ATP-dependent helicase/nuclease subunit A (1235 aa).

Residues threonine 12 to arginine 482 enclose the UvrD-like helicase ATP-binding domain. An ATP-binding site is contributed by alanine 33–threonine 40. One can recognise a UvrD-like helicase C-terminal domain in the interval alanine 509–glycine 800.

The protein belongs to the helicase family. AddA subfamily. As to quaternary structure, heterodimer of AddA and AddB/RexB. Mg(2+) serves as cofactor.

The catalysed reaction is Couples ATP hydrolysis with the unwinding of duplex DNA by translocating in the 3'-5' direction.. It carries out the reaction ATP + H2O = ADP + phosphate + H(+). Its function is as follows. The heterodimer acts as both an ATP-dependent DNA helicase and an ATP-dependent, dual-direction single-stranded exonuclease. Recognizes the chi site generating a DNA molecule suitable for the initiation of homologous recombination. The AddA nuclease domain is required for chi fragment generation; this subunit has the helicase and 3' -&gt; 5' nuclease activities. In Listeria welshimeri serovar 6b (strain ATCC 35897 / DSM 20650 / CCUG 15529 / CIP 8149 / NCTC 11857 / SLCC 5334 / V8), this protein is ATP-dependent helicase/nuclease subunit A.